The sequence spans 467 residues: tRNA(Ile)-lysidine synthase (467 aa).

ATP is bound at residue 35-40 (SGGPDS).

Belongs to the tRNA(Ile)-lysidine synthase family.

The protein resides in the cytoplasm. The enzyme catalyses cytidine(34) in tRNA(Ile2) + L-lysine + ATP = lysidine(34) in tRNA(Ile2) + AMP + diphosphate + H(+). Functionally, ligates lysine onto the cytidine present at position 34 of the AUA codon-specific tRNA(Ile) that contains the anticodon CAU, in an ATP-dependent manner. Cytidine is converted to lysidine, thus changing the amino acid specificity of the tRNA from methionine to isoleucine. This chain is tRNA(Ile)-lysidine synthase, found in Caldanaerobacter subterraneus subsp. tengcongensis (strain DSM 15242 / JCM 11007 / NBRC 100824 / MB4) (Thermoanaerobacter tengcongensis).